A 363-amino-acid polypeptide reads, in one-letter code: Heat-inducible transcription repressor HrcA (363 aa).

Belongs to the HrcA family.

In terms of biological role, negative regulator of class I heat shock genes (grpE-dnaK-dnaJ and groELS operons). Prevents heat-shock induction of these operons. The polypeptide is Heat-inducible transcription repressor HrcA (Rhizobium radiobacter (Agrobacterium tumefaciens)).